The sequence spans 1164 residues: DNA-directed RNA polymerase (1164 aa).

The protein belongs to the RNA polymerase beta chain family. As to quaternary structure, the DNA-dependent RNA polymerase used for intermediate and late genes expression consists of eight subunits 147 kDa, 133 kDa, 35 kDa, 30 kDa, 22 kDa, 19 kDa, 18 kDa and 7 kDa totalling more than 500 kDa in mass. The same holoenzyme, with the addition of the transcription-specificity factor RAP94, is used for early gene expression.

The protein resides in the virion. It catalyses the reaction RNA(n) + a ribonucleoside 5'-triphosphate = RNA(n+1) + diphosphate. In terms of biological role, part of the DNA-dependent RNA polymerase which catalyzes the transcription of viral DNA into RNA using the four ribonucleoside triphosphates as substrates. Responsible for the transcription of early, intermediate and late genes. DNA-dependent RNA polymerase associates with the early transcription factor (ETF), itself composed of OPG118 and OPG133, thereby allowing the early genes transcription. Late transcription, and probably also intermediate transcription, require newly synthesized RNA polymerase. This is DNA-directed RNA polymerase (OPG151) from Monkeypox virus.